The chain runs to 744 residues: Catalase-peroxidase 3 (744 aa).

Residues 106-228 (WHFAGTYRIG…LAASEMGLIY (123 aa)) constitute a cross-link (tryptophyl-tyrosyl-methioninium (Trp-Tyr) (with M-254)). The Proton acceptor role is filled by His-107. Residues 228-254 (YVDPQGPATLPDPLASARDIRETFRRM) constitute a cross-link (tryptophyl-tyrosyl-methioninium (Tyr-Met) (with W-106)). His-269 contributes to the heme b binding site.

The protein belongs to the peroxidase family. Peroxidase/catalase subfamily. Homodimer or homotetramer. The cofactor is heme b. In terms of processing, formation of the three residue Trp-Tyr-Met cross-link is important for the catalase, but not the peroxidase activity of the enzyme.

The enzyme catalyses H2O2 + AH2 = A + 2 H2O. It carries out the reaction 2 H2O2 = O2 + 2 H2O. Bifunctional enzyme with both catalase and broad-spectrum peroxidase activity. The sequence is that of Catalase-peroxidase 3 from Mycolicibacterium smegmatis (strain ATCC 700084 / mc(2)155) (Mycobacterium smegmatis).